The primary structure comprises 776 residues: Outer capsid protein VP4 (776 aa).

The spike head stretch occupies residues 65–224 (LDGPYQPTTF…KCTEYINHGL (160 aa)). Residues Cys-203 and Cys-216 are joined by a disulfide bond. The interval 248 to 479 (AQVNEDIVVS…LISLVPSNDD (232 aa)) is spike body and stalk (antigen domain). The DGE motif; interaction with ITGA2/ITGB1 heterodimer signature appears at 308–310 (DGE). Cys-318 and Cys-380 form a disulfide bridge. Positions 389 to 409 (LPLGNYPVMTGGTVTLHPAGV) are hydrophobic; possible role in virus entry into host cell. Residues 448–450 (YGL) carry the YGL motif; interaction with ITGA4 motif. Positions 484 to 518 (IMNSVTVRQDLERQLGELRDEFNSLSQQIAMSQLI) form a coiled coil. Residues 510–776 (QQIAMSQLID…IENLIMQCRL (267 aa)) form a spike foot region. The KID motif; interaction with HSPA8 motif lies at 644 to 646 (KID).

This sequence belongs to the rotavirus VP4 family. As to quaternary structure, homotrimer. VP4 adopts a dimeric appearance above the capsid surface, while forming a trimeric base anchored inside the capsid layer. Only hints of the third molecule are observed above the capsid surface. It probably performs a series of molecular rearrangements during viral entry. Prior to trypsin cleavage, it is flexible. The priming trypsin cleavage triggers its rearrangement into rigid spikes with approximate two-fold symmetry of their protruding parts. After an unknown second triggering event, cleaved VP4 may undergo another rearrangement, in which two VP5* subunits fold back on themselves and join a third subunit to form a tightly associated trimer, shaped like a folded umbrella. Interacts with VP6. Interacts with VP7. In terms of assembly, homotrimer. The trimer is coiled-coil stabilized by its C-terminus, however, its N-terminus, known as antigen domain or 'body', seems to be flexible allowing it to self-associate either as a dimer or a trimer. Proteolytic cleavage by trypsin results in activation of VP4 functions and greatly increases infectivity. The penetration into the host cell is dependent on trypsin treatment of VP4. It produces two peptides, VP5* and VP8* that remain associated with the virion. Cleavage of VP4 by trypsin probably occurs in vivo in the lumen of the intestine prior to infection of enterocytes. Trypsin seems to be incorporated into the three-layered viral particles but remains inactive as long as the viral outer capsid is intact and would only be activated upon the solubilization of the latter.

The protein resides in the virion. Its subcellular location is the host rough endoplasmic reticulum. It is found in the host cell membrane. The protein localises to the host cytoplasm. It localises to the host cytoskeleton. The protein resides in the host endoplasmic reticulum-Golgi intermediate compartment. Spike-forming protein that mediates virion attachment to the host epithelial cell receptors and plays a major role in cell penetration, determination of host range restriction and virulence. Rotavirus attachment and entry into the host cell probably involves multiple sequential contacts between the outer capsid proteins VP4 and VP7, and the cell receptors. It is subsequently lost, together with VP7, following virus entry into the host cell. Following entry into the host cell, low intracellular or intravesicular Ca(2+) concentration probably causes the calcium-stabilized VP7 trimers to dissociate from the virion. This step is probably necessary for the membrane-disrupting entry step and the release of VP4, which is locked onto the virion by VP7. During the virus exit from the host cell, VP4 seems to be required to target the newly formed virions to the host cell lipid rafts. Its function is as follows. Forms the spike 'foot' and 'body' and acts as a membrane permeabilization protein that mediates release of viral particles from endosomal compartments into the cytoplasm. During entry, the part of VP5* that protrudes from the virus folds back on itself and reorganizes from a local dimer to a trimer. This reorganization may be linked to membrane penetration by exposing VP5* hydrophobic region. In integrin-dependent strains, VP5* targets the integrin heterodimer ITGA2/ITGB1 for cell attachment. In terms of biological role, forms the head of the spikes and mediates the recognition of specific host cell surface glycans. It is the viral hemagglutinin and an important target of neutralizing antibodies. In sialic acid-dependent strains, VP8* binds to host cell sialic acid, most probably a ganglioside, providing the initial contact. In some other strains, VP8* mediates the attachment to histo-blood group antigens (HBGAs) for viral entry. This chain is Outer capsid protein VP4, found in Rotavirus A (strain RVA/Pig/Mexico/YM/1983/G11P9[7]) (RV-A).